The primary structure comprises 400 residues: S-adenosylmethionine synthase (400 aa).

Residue 136–141 (GTGSTD) coordinates ATP.

It belongs to the AdoMet synthase 2 family. Mg(2+) is required as a cofactor.

The catalysed reaction is L-methionine + ATP + H2O = S-adenosyl-L-methionine + phosphate + diphosphate. The protein operates within amino-acid biosynthesis; S-adenosyl-L-methionine biosynthesis; S-adenosyl-L-methionine from L-methionine: step 1/1. Functionally, catalyzes the formation of S-adenosylmethionine from methionine and ATP. This chain is S-adenosylmethionine synthase, found in Methanospirillum hungatei JF-1 (strain ATCC 27890 / DSM 864 / NBRC 100397 / JF-1).